We begin with the raw amino-acid sequence, 630 residues long: Putative polypeptide N-acetylgalactosaminyltransferase 10 (630 aa).

Residues 1–6 lie on the Cytoplasmic side of the membrane; that stretch reads MNVDLR. A helical; Signal-anchor for type II membrane protein transmembrane segment spans residues 7-26; sequence LIVRLLLAILLTSLVTTILM. The Lumenal segment spans residues 27-630; sequence GKQIHRRLVK…APYDPQREPH (604 aa). N-linked (GlcNAc...) asparagine glycans are attached at residues Asn72, Asn84, Asn146, and Asn168. Cystine bridges form between Cys157-Cys386, Cys377-Cys456, and Cys496-Cys513. Positions 166–277 are catalytic subdomain A; sequence LPNVTVIIAF…TNWLPPLLEP (112 aa). Residues Asp207 and Arg238 each coordinate substrate. Asp261 lines the Mn(2+) pocket. Ser262 contacts substrate. His263 provides a ligand contact to Mn(2+). The catalytic subdomain B stretch occupies residues 333–394; sequence PYRTPVLSGA…PCARVGHIGK (62 aa). Residue Trp363 coordinates substrate. A Mn(2+)-binding site is contributed by His391. The 136-residue stretch at 483-618 folds into the Ricin B-type lectin domain; it reads FSGVIESVAF…NQLEQQWKVG (136 aa). An N-linked (GlcNAc...) asparagine glycan is attached at Asn525. Cystine bridges form between Cys543/Cys559 and Cys586/Cys606.

Belongs to the glycosyltransferase 2 family. GalNAc-T subfamily. The cofactor is Mn(2+). In terms of tissue distribution, during embryonic stages 9-11, weakly expressed in the mesoderm. During embryonic stages 12-13, very weak expression is observed in the somatic mesoderm region. No expression detected from stage 14-15. During embryonic stages 16-17, expressed in the epidermis and the antennomaxillary complex. In third instar larvae, expressed ubiquitously in wing, eye-antennal, leg and haltere imaginal disks.

The protein resides in the golgi apparatus membrane. The catalysed reaction is L-seryl-[protein] + UDP-N-acetyl-alpha-D-galactosamine = a 3-O-[N-acetyl-alpha-D-galactosaminyl]-L-seryl-[protein] + UDP + H(+). The enzyme catalyses L-threonyl-[protein] + UDP-N-acetyl-alpha-D-galactosamine = a 3-O-[N-acetyl-alpha-D-galactosaminyl]-L-threonyl-[protein] + UDP + H(+). It participates in protein modification; protein glycosylation. Its function is as follows. May catalyze the initial reaction in O-linked oligosaccharide biosynthesis, the transfer of an N-acetyl-D-galactosamine residue to a serine or threonine residue on the protein receptor. The chain is Putative polypeptide N-acetylgalactosaminyltransferase 10 (pgant10) from Drosophila melanogaster (Fruit fly).